The chain runs to 835 residues: Cap-specific mRNA (nucleoside-2'-O-)-methyltransferase 1 (835 aa).

The tract at residues 1 to 67 (MKRRTDPECT…EGKQHSSDSF (67 aa)) is disordered. A Bipartite nuclear localization signal motif is present at residues 2 to 19 (KRRTDPECTAPIKKQKKR). Phosphoserine occurs at positions 28, 31, 53, 66, and 91. Positions 37-54 (SSVSHGAKASTTSLSGSD) are enriched in polar residues. The segment covering 57–67 (TEGKQHSSDSF) has biased composition (basic and acidic residues). In terms of domain architecture, G-patch spans 87 to 133 (YNSVSQKLMAKMGFREGEGLGKYSQGRKDIVEASSQKGRRGLGLTLR). Lys-108 carries the N6-acetyllysine modification. Substrate-binding positions include 203-207 (KSVFD) and Arg-218. Residues 231–450 (FFLNRAAMKM…ERYVVCKGLK (220 aa)) form the RrmJ-type SAM-dependent 2'-O-MTase domain. Asn-234 provides a ligand contact to S-adenosyl-L-methionine. Lys-239 is an active-site residue. S-adenosyl-L-methionine contacts are provided by residues 277-283 (CAGPGGF) and 335-336 (DI). Residue Asp-364 is part of the active site. 374–376 (NLQ) serves as a coordination point for substrate. Lys-404 (proton acceptor) is an active-site residue. Residue Asn-439 participates in substrate binding. Positions 727–835 (SSGTPKLSYT…VLSFIQMHRA (109 aa)) are interaction with POLR2A. The WW domain maps to 752-786 (RTVNEPWTMGFSKSFKKKFFYNKKTKDSTFDLPAD).

Interacts with POLR2A (via C-terminus).

It is found in the nucleus. The catalysed reaction is a 5'-end (N(7)-methyl 5'-triphosphoguanosine)-ribonucleoside in mRNA + S-adenosyl-L-methionine = a 5'-end (N(7)-methyl 5'-triphosphoguanosine)-(2'-O-methyl-ribonucleoside) in mRNA + S-adenosyl-L-homocysteine + H(+). In terms of biological role, S-adenosyl-L-methionine-dependent methyltransferase that mediates mRNA cap1 2'-O-ribose methylation to the 5'-cap structure of mRNAs. Methylates the ribose of the first nucleotide of a m(7)GpppG-capped mRNA and small nuclear RNA (snRNA) to produce m(7)GpppRm (cap1). Displays a preference for cap0 transcripts. Cap1 modification is linked to higher levels of translation. May be involved in the interferon response pathway. The chain is Cap-specific mRNA (nucleoside-2'-O-)-methyltransferase 1 (CMTR1) from Homo sapiens (Human).